Reading from the N-terminus, the 217-residue chain is Chaperone protein TorD (217 aa).

Belongs to the TorD/DmsD family. TorD subfamily.

Its subcellular location is the cytoplasm. Functionally, involved in the biogenesis of TorA. Acts on TorA before the insertion of the molybdenum cofactor and, as a result, probably favors a conformation of the apoenzyme that is competent for acquiring the cofactor. This Shewanella oneidensis (strain ATCC 700550 / JCM 31522 / CIP 106686 / LMG 19005 / NCIMB 14063 / MR-1) protein is Chaperone protein TorD.